A 314-amino-acid polypeptide reads, in one-letter code: ATP synthase gamma chain (314 aa).

Belongs to the ATPase gamma chain family. As to quaternary structure, F-type ATPases have 2 components, CF(1) - the catalytic core - and CF(0) - the membrane proton channel. CF(1) has five subunits: alpha(3), beta(3), gamma(1), delta(1), epsilon(1). CF(0) has three main subunits: a, b and c.

It localises to the cell membrane. Functionally, produces ATP from ADP in the presence of a proton gradient across the membrane. The gamma chain is believed to be important in regulating ATPase activity and the flow of protons through the CF(0) complex. This Cutibacterium acnes (strain DSM 16379 / KPA171202) (Propionibacterium acnes) protein is ATP synthase gamma chain.